The sequence spans 1526 residues: High affinity cGMP-specific 3',5'-cyclic phosphodiesterase 9A (1526 aa).

The span at 1–43 (MYQDSGCSSSSSRRGSSSAAAATSTAATAAETAAAAAATTTSS) shows a compositional bias: low complexity. Disordered regions lie at residues 1–48 (MYQD…DEET), 266–348 (SSRS…SGTA), and 393–476 (RHHH…ASDC). 2 stretches are compositionally biased toward basic and acidic residues: residues 270-282 (RSSE…HEQD) and 305-314 (EHPSEKPERT). Low complexity-rich tracts occupy residues 324–348 (IAVT…SGTA) and 401–440 (QQHQ…ATAT). The segment covering 441–462 (PSVEQPATSGTTNIHLQPTSLP) has biased composition (polar residues). The 322-residue stretch at 664-985 (VKRRFLEICD…EYYRRLNDAQ (322 aa)) folds into the PDEase domain. H740 functions as the Proton donor in the catalytic mechanism. 740-744 (HNFRH) is a 3',5'-cyclic GMP binding site. Zn(2+) contacts are provided by H744, H780, D781, and D890. D781 and D890 together coordinate 3',5'-cyclic GMP. D781 provides a ligand contact to Mg(2+). Disordered stretches follow at residues 986–1170 (TKTR…SSGG), 1265–1284 (TEAD…KKIP), 1314–1351 (SNGS…GSSW), 1372–1406 (RFGS…DGLG), and 1469–1496 (RYSS…LTTG). Residues 993–1005 (ADSNTSATSDSNS) show a composition bias toward low complexity. Gly residues predominate over residues 1033–1057 (NSQGSGGGGGGGGGGGAGGGTGSGC). A compositionally biased stretch (polar residues) spans 1065–1093 (VSPQMPRSGSGISVKSRRSIPSQKSASRT). The segment covering 1125–1136 (VAEKTSKFKVDT) has biased composition (basic and acidic residues). Residues 1139-1148 (SSNRSKSSHS) are compositionally biased toward low complexity. Residues 1314 to 1324 (SNGSTRSSASS) show a composition bias toward low complexity. Gly residues predominate over residues 1325-1340 (GRGGSGVPGGSGGSGM). 2 stretches are compositionally biased toward low complexity: residues 1341 to 1350 (PGPSAGSGSS) and 1375 to 1397 (STRS…NANG). Residues 1470 to 1486 (YSSNDSSRHPSNNTLQS) are compositionally biased toward polar residues.

This sequence belongs to the cyclic nucleotide phosphodiesterase family. PDE9 subfamily. Zn(2+) serves as cofactor. Mg(2+) is required as a cofactor. Expressed in Malpighian tubules and adult fly head.

The catalysed reaction is 3',5'-cyclic GMP + H2O = GMP + H(+). It participates in purine metabolism; 3',5'-cyclic GMP degradation; GMP from 3',5'-cyclic GMP: step 1/1. Specifically hydrolyzes the second messenger cGMP, which is a key regulator of many important physiological processes. Highly specific: compared to other members of the cyclic nucleotide phosphodiesterase family, has the highest affinity and selectivity for cGMP. In Drosophila melanogaster (Fruit fly), this protein is High affinity cGMP-specific 3',5'-cyclic phosphodiesterase 9A.